An 824-amino-acid polypeptide reads, in one-letter code: Leucine--tRNA ligase (824 aa).

Residues 42–52 (PYPSGRIHMGH) carry the 'HIGH' region motif. Residues 581–585 (KMSKS) carry the 'KMSKS' region motif. K584 contacts ATP.

Belongs to the class-I aminoacyl-tRNA synthetase family.

Its subcellular location is the cytoplasm. It catalyses the reaction tRNA(Leu) + L-leucine + ATP = L-leucyl-tRNA(Leu) + AMP + diphosphate. The polypeptide is Leucine--tRNA ligase (Geobacter metallireducens (strain ATCC 53774 / DSM 7210 / GS-15)).